The chain runs to 599 residues: Beta-glucuronidase (599 aa).

Asp160 and Asn407 together coordinate D-glucuronate. The active-site Proton donor is Glu408. The D-glucuronate site is built by Asn462, Tyr468, Glu501, Trp546, and Lys565. The Nucleophile role is filled by Glu501. The N-K motif motif lies at 563-565 (NHK).

Belongs to the glycosyl hydrolase 2 family.

The catalysed reaction is a beta-D-glucuronoside + H2O = D-glucuronate + an alcohol. With respect to regulation, inhibited by a set of synthetic compounds like thio-urea derivatives and analogs. Inhibitors of gut microbial beta-glucuronidases are expected to block the reactivation of glucuronidated cancer drugs, and to alleviate drug-induced GI toxicity. Its function is as follows. Displays beta-glucuronidase activity with the artificial substrate p-nitrophenyl-beta-D-glucuronide (PNPG). Is likely capable of scavenging glucuronate from a range of chemically distinct xenobiotic and endobiotic glucuronides present in the gastrointestinal (GI) tract, to be able to utilize these diverse sources of carbon. As part of the GI microbiome, this enzyme would be able to reactivate glucuronide drug conjugates, such reactivated compounds can significantly damage the GI tract. The polypeptide is Beta-glucuronidase (Streptococcus agalactiae serotype V (strain ATCC BAA-611 / 2603 V/R)).